The primary structure comprises 180 residues: ATP-dependent protease subunit HslV (180 aa).

Residue Thr6 is part of the active site. Residues Ala164, Cys167, and Thr170 each coordinate Na(+).

The protein belongs to the peptidase T1B family. HslV subfamily. In terms of assembly, a double ring-shaped homohexamer of HslV is capped on each side by a ring-shaped HslU homohexamer. The assembly of the HslU/HslV complex is dependent on binding of ATP.

The protein localises to the cytoplasm. It catalyses the reaction ATP-dependent cleavage of peptide bonds with broad specificity.. Allosterically activated by HslU binding. In terms of biological role, protease subunit of a proteasome-like degradation complex believed to be a general protein degrading machinery. This Borrelia recurrentis (strain A1) protein is ATP-dependent protease subunit HslV.